A 948-amino-acid chain; its full sequence is Hexagonally packed intermediate-layer surface protein (948 aa).

An N-terminal signal peptide occupies residues 1-17 (MKKNIALMALTGILTLA). 2 cysteine pairs are disulfide-bonded: C168–C187 and C554–C666.

Post-translationally, glycosylated. Contains tightly bound reducing sugars (six per polypeptide chain) and fatty acids (covalently bound and located in the N-terminal region).

The protein resides in the secreted. The protein localises to the cell wall. It is found in the S-layer. In terms of biological role, shape maintenance, possible protection from noxious enzymes or exogenous and unsettling DNA, and may mediate homotypic cell-cell contacts. In Deinococcus radiodurans (strain ATCC 13939 / DSM 20539 / JCM 16871 / CCUG 27074 / LMG 4051 / NBRC 15346 / NCIMB 9279 / VKM B-1422 / R1), this protein is Hexagonally packed intermediate-layer surface protein (hpi).